The sequence spans 148 residues: Large ribosomal subunit protein uL15 (148 aa).

Over residues 1 to 40 the composition is skewed to basic and acidic residues; the sequence is MADILQMHDLKPAPGANKDRIRVGRGEGSKGKTSGRGDKG. Positions 1 to 47 are disordered; that stretch reads MADILQMHDLKPAPGANKDRIRVGRGEGSKGKTSGRGDKGTKKRYQV.

The protein belongs to the universal ribosomal protein uL15 family. In terms of assembly, part of the 50S ribosomal subunit.

In terms of biological role, binds to the 23S rRNA. The chain is Large ribosomal subunit protein uL15 from Bifidobacterium adolescentis (strain ATCC 15703 / DSM 20083 / NCTC 11814 / E194a).